The primary structure comprises 221 residues: Large ribosomal subunit protein uL3 (221 aa).

Belongs to the universal ribosomal protein uL3 family. In terms of assembly, part of the 50S ribosomal subunit. Forms a cluster with proteins L14 and L19.

One of the primary rRNA binding proteins, it binds directly near the 3'-end of the 23S rRNA, where it nucleates assembly of the 50S subunit. In Chlamydia trachomatis serovar L2 (strain ATCC VR-902B / DSM 19102 / 434/Bu), this protein is Large ribosomal subunit protein uL3.